A 148-amino-acid polypeptide reads, in one-letter code: Transcription antitermination protein NusB (148 aa).

Belongs to the NusB family.

In terms of biological role, involved in transcription antitermination. Required for transcription of ribosomal RNA (rRNA) genes. Binds specifically to the boxA antiterminator sequence of the ribosomal RNA (rrn) operons. This is Transcription antitermination protein NusB from Novosphingobium aromaticivorans (strain ATCC 700278 / DSM 12444 / CCUG 56034 / CIP 105152 / NBRC 16084 / F199).